Here is a 397-residue protein sequence, read N- to C-terminus: CCA-adding enzyme (397 aa).

Residues Gly26 and Arg29 each coordinate ATP. Gly26 and Arg29 together coordinate CTP. Residues Asp39 and Asp41 each coordinate Mg(2+). ATP is bound by residues Arg110, Asp153, Arg156, Arg159, and Arg162. CTP is bound by residues Arg110, Asp153, Arg156, Arg159, and Arg162.

The protein belongs to the tRNA nucleotidyltransferase/poly(A) polymerase family. Bacterial CCA-adding enzyme type 3 subfamily. In terms of assembly, homodimer. Mg(2+) is required as a cofactor.

The catalysed reaction is a tRNA precursor + 2 CTP + ATP = a tRNA with a 3' CCA end + 3 diphosphate. It catalyses the reaction a tRNA with a 3' CCA end + 2 CTP + ATP = a tRNA with a 3' CCACCA end + 3 diphosphate. Functionally, catalyzes the addition and repair of the essential 3'-terminal CCA sequence in tRNAs without using a nucleic acid template. Adds these three nucleotides in the order of C, C, and A to the tRNA nucleotide-73, using CTP and ATP as substrates and producing inorganic pyrophosphate. tRNA 3'-terminal CCA addition is required both for tRNA processing and repair. Also involved in tRNA surveillance by mediating tandem CCA addition to generate a CCACCA at the 3' terminus of unstable tRNAs. While stable tRNAs receive only 3'-terminal CCA, unstable tRNAs are marked with CCACCA and rapidly degraded. This Bacillus cereus (strain B4264) protein is CCA-adding enzyme.